The primary structure comprises 313 residues: Ribosomal protein L11 methyltransferase (313 aa).

4 residues coordinate S-adenosyl-L-methionine: Thr-151, Gly-172, Asp-194, and Asn-245.

Belongs to the methyltransferase superfamily. PrmA family.

The protein localises to the cytoplasm. The enzyme catalyses L-lysyl-[protein] + 3 S-adenosyl-L-methionine = N(6),N(6),N(6)-trimethyl-L-lysyl-[protein] + 3 S-adenosyl-L-homocysteine + 3 H(+). Methylates ribosomal protein L11. This chain is Ribosomal protein L11 methyltransferase, found in Nitrosomonas europaea (strain ATCC 19718 / CIP 103999 / KCTC 2705 / NBRC 14298).